The sequence spans 354 residues: Ornithine transcarbamylase, mitochondrial (354 aa).

The N-terminal 32 residues, 1–32 (MLFHLRTLLNNAALRNGHNFVVRNFRCGQPLQ), are a transit peptide targeting the mitochondrion. N6-acetyllysine; alternate is present on Lys-70. Lys-70 carries the post-translational modification N6-succinyllysine; alternate. Lys-80 is subject to N6-succinyllysine. Residue Lys-88 is modified to N6-acetyllysine; alternate. N6-succinyllysine; alternate is present on Lys-88. At Ser-133 the chain carries Phosphoserine. Lys-144, Lys-221, Lys-231, and Lys-238 each carry N6-acetyllysine; alternate. Lys-144, Lys-221, Lys-231, and Lys-238 each carry N6-succinyllysine; alternate. N6-acetyllysine is present on Lys-243. Asp-263 is a catalytic residue. N6-succinyllysine occurs at positions 274 and 289. At Lys-292 the chain carries N6-acetyllysine; alternate. At Lys-292 the chain carries N6-succinyllysine; alternate. Residue Cys-303 is part of the active site. Lys-307 carries the N6-acetyllysine; alternate modification. N6-succinyllysine; alternate is present on Lys-307.

Belongs to the aspartate/ornithine carbamoyltransferase superfamily. OTCase family. As to quaternary structure, homotrimer. Post-translationally, acetylation at Lys-88 negatively regulates ornithine carbamoyltransferase activity in response to nutrient signals.

It is found in the mitochondrion matrix. It carries out the reaction carbamoyl phosphate + L-ornithine = L-citrulline + phosphate + H(+). It participates in nitrogen metabolism; urea cycle; L-citrulline from L-ornithine and carbamoyl phosphate: step 1/1. Its activity is regulated as follows. Negatively regulated by lysine acetylation. Its function is as follows. Catalyzes the second step of the urea cycle, the condensation of carbamoyl phosphate with L-ornithine to form L-citrulline. The urea cycle ensures the detoxification of ammonia by converting it to urea for excretion. The protein is Ornithine transcarbamylase, mitochondrial of Bos taurus (Bovine).